Consider the following 774-residue polypeptide: Polyribonucleotide nucleotidyltransferase (774 aa).

Asp485 and Asp491 together coordinate Mg(2+). One can recognise a KH domain in the interval 552-611 (PRIETMSVPKDKIRDIIGTGGKIIREIVATTGAKVDIDDDGTVKISSSDTAQIEAARNWI). Residues 621 to 689 (GKIYTGKVVN…NRGKVRLSMR (69 aa)) form the S1 motif domain. The interval 689–774 (RVVDQETGEE…APAFLTRDDD (86 aa)) is disordered. Residues 700-755 (PDTRPPREERPRGDRGDRGDRGPRRDGDRRREGGDRGPRRDRGDRGDRPRRERSEG) are compositionally biased toward basic and acidic residues.

Belongs to the polyribonucleotide nucleotidyltransferase family. It depends on Mg(2+) as a cofactor.

Its subcellular location is the cytoplasm. The enzyme catalyses RNA(n+1) + phosphate = RNA(n) + a ribonucleoside 5'-diphosphate. Its function is as follows. Involved in mRNA degradation. Catalyzes the phosphorolysis of single-stranded polyribonucleotides processively in the 3'- to 5'-direction. This is Polyribonucleotide nucleotidyltransferase from Rhizorhabdus wittichii (strain DSM 6014 / CCUG 31198 / JCM 15750 / NBRC 105917 / EY 4224 / RW1) (Sphingomonas wittichii).